The sequence spans 270 residues: Cyclase-like protein 3 (270 aa).

Residues 1–23 (MMAHLAPLFLLLLLLLLPLHAAA) form the signal peptide.

This sequence belongs to the Cyclase 1 superfamily. Highly expressed in leaf sheaths. leaf collars and flag leaves. Expressed in roots, stems, glumes, young panicles and pistils.

It is found in the secreted. The protein localises to the extracellular space. It localises to the extracellular matrix. Functionally, may be involved in response to stresses. This chain is Cyclase-like protein 3, found in Oryza sativa subsp. japonica (Rice).